A 390-amino-acid polypeptide reads, in one-letter code: MSSSSSTTTNTTTESDSSSLPTHIGRSNSDGIIDTTPFLPPTVTRTISVDEESNPIHRSARRQGLREAARFLRHAGSRRMMREPSMLVRETAAEQLEERQSDWAYSKPVVFLDILWNLAFVAIGVAVLILSRDEKPNMPLRVWVVGYGIQCWLHMACVCVEYRRRRRRRHPEDGGGSGLTNSSSQQYVSLAQLEDRGETSNPAKHLESANTMFSFIWWIIGFYWVSAGGQTLSSDSPQLYWLCIIFLGFDVFFVVFCVALACVIGLAVCCCLPCIIAILYAVADQEGASKNDIDQMPKFRFTKTGNVEKLSGKARGIMTECGTDSPIERSLSPEDAECCICLCEYEDGVELRELPCNHHFHCTCIDKWLHINSRCPLCKFNILKNANNEV.

The segment covering Met-1–Ser-19 has biased composition (low complexity). The tract at residues Met-1–Leu-39 is disordered. Transmembrane regions (helical) follow at residues Val-109 to Ile-129, Val-142 to Tyr-162, Met-212 to Leu-232, Ile-244 to Ile-264, and Gly-265 to Gln-285. The RING-type; atypical zinc finger occupies Cys-338 to Lys-379.

Its subcellular location is the membrane. The catalysed reaction is S-ubiquitinyl-[E2 ubiquitin-conjugating enzyme]-L-cysteine + [acceptor protein]-L-lysine = [E2 ubiquitin-conjugating enzyme]-L-cysteine + N(6)-ubiquitinyl-[acceptor protein]-L-lysine.. It participates in protein modification; protein ubiquitination. Its function is as follows. Mediates E2-dependent protein ubiquitination in vitro. In Arabidopsis thaliana (Mouse-ear cress), this protein is E3 ubiquitin-protein ligase At4g11680.